Here is a 402-residue protein sequence, read N- to C-terminus: Chorismate synthase (402 aa).

NADP(+)-binding residues include Arg40 and Arg46. Residues 134–136 (RAS), 255–256 (QA), Gly299, 314–318 (KPIAT), and Arg340 contribute to the FMN site.

It belongs to the chorismate synthase family. Homotetramer. It depends on FMNH2 as a cofactor.

It catalyses the reaction 5-O-(1-carboxyvinyl)-3-phosphoshikimate = chorismate + phosphate. The protein operates within metabolic intermediate biosynthesis; chorismate biosynthesis; chorismate from D-erythrose 4-phosphate and phosphoenolpyruvate: step 7/7. Its function is as follows. Catalyzes the anti-1,4-elimination of the C-3 phosphate and the C-6 proR hydrogen from 5-enolpyruvylshikimate-3-phosphate (EPSP) to yield chorismate, which is the branch point compound that serves as the starting substrate for the three terminal pathways of aromatic amino acid biosynthesis. This reaction introduces a second double bond into the aromatic ring system. The sequence is that of Chorismate synthase from Leifsonia xyli subsp. xyli (strain CTCB07).